The chain runs to 425 residues: Polyadenylate-binding protein RBP47B' (425 aa).

RRM domains lie at 24–102 (RTLW…LNWA), 116–195 (HSIF…AATP), and 237–309 (TTIS…WSKN).

Belongs to the polyadenylate-binding RBP47 family. Interacts with the poly(A) tail of mRNA in nucleus.

Its subcellular location is the nucleus. It localises to the cytoplasmic granule. In terms of biological role, heterogeneous nuclear ribonucleoprotein (hnRNP)-protein binding the poly(A) tail of mRNA and probably involved in some steps of pre-mRNA maturation. In Arabidopsis thaliana (Mouse-ear cress), this protein is Polyadenylate-binding protein RBP47B' (RBP47B').